The primary structure comprises 959 residues: DNA polymerase 1 (959 aa).

Residues 1–110 (MRVRGGQEAA…LTLEPSPQSE (110 aa)) are disordered. The span at 44-60 (KKPEPPPTLHREREPES) shows a compositional bias: basic and acidic residues.

It belongs to the DNA polymerase type-B family.

It catalyses the reaction DNA(n) + a 2'-deoxyribonucleoside 5'-triphosphate = DNA(n+1) + diphosphate. The sequence is that of DNA polymerase 1 (polA) from Aeropyrum pernix (strain ATCC 700893 / DSM 11879 / JCM 9820 / NBRC 100138 / K1).